We begin with the raw amino-acid sequence, 141 residues long: Large ribosomal subunit protein uL14 (141 aa).

Belongs to the universal ribosomal protein uL14 family. Part of the 50S ribosomal subunit. Forms a cluster with proteins L3 and L24e, part of which may contact the 16S rRNA in 2 intersubunit bridges.

In terms of biological role, binds to 23S rRNA. Forms part of two intersubunit bridges in the 70S ribosome. This is Large ribosomal subunit protein uL14 from Pyrococcus furiosus (strain ATCC 43587 / DSM 3638 / JCM 8422 / Vc1).